A 608-amino-acid chain; its full sequence is Phosphogluconate dehydratase (608 aa).

Residues Cys154 and Cys221 each coordinate [4Fe-4S] cluster.

The protein belongs to the IlvD/Edd family. The cofactor is [4Fe-4S] cluster.

The catalysed reaction is 6-phospho-D-gluconate = 2-dehydro-3-deoxy-6-phospho-D-gluconate + H2O. The protein operates within carbohydrate metabolism; Entner-Doudoroff pathway. Functionally, catalyzes the dehydration of 6-phospho-D-gluconate to 2-dehydro-3-deoxy-6-phospho-D-gluconate. In Helicobacter pylori (strain ATCC 700392 / 26695) (Campylobacter pylori), this protein is Phosphogluconate dehydratase.